A 111-amino-acid chain; its full sequence is UPF0060 membrane protein Pden_1837 (111 aa).

Transmembrane regions (helical) follow at residues 7-27, 30-50, 62-82, and 91-111; these read IAVY…FWAW, LGKS…FAWL, AYAA…WLTE, and ILGG…PRAA.

The protein belongs to the UPF0060 family.

It localises to the cell inner membrane. The sequence is that of UPF0060 membrane protein Pden_1837 from Paracoccus denitrificans (strain Pd 1222).